Reading from the N-terminus, the 148-residue chain is Protoporphyrinogen IX oxidase (148 aa).

4 consecutive transmembrane segments (helical) span residues 7–27 (YFLW…AALF), 59–79 (FIAS…LLIA), 86–106 (GGWL…HFYC), and 128–148 (FNEI…VKPF). Heme is bound at residue H15. K92 is a binding site for heme.

The protein belongs to the HemJ family. Homodimer. Requires heme b as cofactor.

It localises to the cell membrane. It carries out the reaction protoporphyrinogen IX + 3 A = protoporphyrin IX + 3 AH2. The protein operates within porphyrin-containing compound metabolism; protoporphyrin-IX biosynthesis; protoporphyrin-IX from protoporphyrinogen-IX: step 1/1. Its function is as follows. Catalyzes the oxidation of protoporphyrinogen IX to protoporphyrin IX. Is involved in the biosynthesis of tetrapyrrole molecules like heme. Does not use oxygen or artificial electron acceptors such as menadione or benzoquinone. The polypeptide is Protoporphyrinogen IX oxidase (Helicobacter pylori (strain J99 / ATCC 700824) (Campylobacter pylori J99)).